Reading from the N-terminus, the 325-residue chain is MMFGILGTAGIGVKSVIPAVQASEHEAAAIASRDEARASAVADELGIPTAYGSYEALLADDSLDAVYIPLPNGLHADWVRAAADRGLHVLCEKPLTASADETAAVFDYCEDAGVTLMEAFMYRFHPLTERAAELVASELGAVVSVTSNFSFRLPDGADDIRIDPDLAGGSVMDVGCYAVSAARLFLGTPDRVYATTTDTRDCGVDTRMSGVLEYDSGATARVESSFDTPETQYYRVQTTDGRLEANPAFNVDPTAAAELTYATDGRVVTETFDPTDSYRREVEAFARAVETGETPRVDREESVSVMRTIDAIYESAETGAAVELD.

The signal sequence occupies residues methionine 1 to alanine 22.

Belongs to the Gfo/Idh/MocA family. In terms of assembly, homotetramer.

The protein localises to the secreted. The enzyme catalyses D-xylose + NADP(+) = D-xylono-1,5-lactone + NADPH + H(+). In terms of biological role, NADP-dependent D-xylose dehydrogenase involved in the degradation of D-xylose, a major component of hemicelluloses such as xylan. Even if it shows D-xylose dehydrogenase activity, it is not essential for D-xylose degradation. This chain is D-xylose 1-dehydrogenase (NADP(+)) 2, found in Haloferax volcanii (strain ATCC 29605 / DSM 3757 / JCM 8879 / NBRC 14742 / NCIMB 2012 / VKM B-1768 / DS2) (Halobacterium volcanii).